The chain runs to 256 residues: Cysteine-rich repeat secretory protein 29 (256 aa).

Residues 1–26 form the signal peptide; the sequence is MSSVFGSVHILAMIAIQLLLIHSVSS. 2 Gnk2-homologous domains span residues 33–136 and 142–253; these read YLHH…SVAS and YEND…LYPF.

This sequence belongs to the cysteine-rich repeat secretory protein family.

The protein resides in the secreted. The protein is Cysteine-rich repeat secretory protein 29 (CRRSP29) of Arabidopsis thaliana (Mouse-ear cress).